The chain runs to 156 residues: ATP synthase subunit b (156 aa).

The helical transmembrane segment at 5-25 (LTLIGQAIAFAIFVAFCMKFV) threads the bilayer.

Belongs to the ATPase B chain family. F-type ATPases have 2 components, F(1) - the catalytic core - and F(0) - the membrane proton channel. F(1) has five subunits: alpha(3), beta(3), gamma(1), delta(1), epsilon(1). F(0) has three main subunits: a(1), b(2) and c(10-14). The alpha and beta chains form an alternating ring which encloses part of the gamma chain. F(1) is attached to F(0) by a central stalk formed by the gamma and epsilon chains, while a peripheral stalk is formed by the delta and b chains.

It localises to the cell inner membrane. In terms of biological role, f(1)F(0) ATP synthase produces ATP from ADP in the presence of a proton or sodium gradient. F-type ATPases consist of two structural domains, F(1) containing the extramembraneous catalytic core and F(0) containing the membrane proton channel, linked together by a central stalk and a peripheral stalk. During catalysis, ATP synthesis in the catalytic domain of F(1) is coupled via a rotary mechanism of the central stalk subunits to proton translocation. Its function is as follows. Component of the F(0) channel, it forms part of the peripheral stalk, linking F(1) to F(0). The protein is ATP synthase subunit b of Acinetobacter baylyi (strain ATCC 33305 / BD413 / ADP1).